Reading from the N-terminus, the 132-residue chain is Peptide methionine sulfoxide reductase MsrB (132 aa).

In terms of domain architecture, MsrB spans 8-130; it reads LDSWREELTE…NSASLKLVPR (123 aa). Zn(2+) is bound by residues Cys-47, Cys-50, Cys-96, and Cys-99. Cys-119 acts as the Nucleophile in catalysis.

This sequence belongs to the MsrB Met sulfoxide reductase family. Zn(2+) is required as a cofactor.

The enzyme catalyses L-methionyl-[protein] + [thioredoxin]-disulfide + H2O = L-methionyl-(R)-S-oxide-[protein] + [thioredoxin]-dithiol. This is Peptide methionine sulfoxide reductase MsrB from Pseudomonas aeruginosa (strain UCBPP-PA14).